The following is an 83-amino-acid chain: Acyl carrier protein (83 aa).

The Carrier domain occupies 2–77 (NEILSKIKSI…DANQYIKKYL (76 aa)). Ser37 is modified (O-(pantetheine 4'-phosphoryl)serine).

It belongs to the acyl carrier protein (ACP) family. In terms of processing, 4'-phosphopantetheine is transferred from CoA to a specific serine of apo-ACP by AcpS. This modification is essential for activity because fatty acids are bound in thioester linkage to the sulfhydryl of the prosthetic group.

The protein resides in the cytoplasm. It participates in lipid metabolism; fatty acid biosynthesis. In terms of biological role, carrier of the growing fatty acid chain in fatty acid biosynthesis. This is Acyl carrier protein from Karelsulcia muelleri (strain GWSS) (Sulcia muelleri).